Here is an 801-residue protein sequence, read N- to C-terminus: Phenylalanine--tRNA ligase beta subunit (801 aa).

The tRNA-binding domain maps to 39–152 (ARAFSGVVVG…TDAPIGTDIR (114 aa)). Residues 407–482 (PARAPITLPI…RIYGYDNIPS (76 aa)) form the B5 domain. Mg(2+) contacts are provided by D460, D466, E469, and E470. Residues 706–799 (SKFPQVRRDI…LTVEHSAQLR (94 aa)) form the FDX-ACB domain.

It belongs to the phenylalanyl-tRNA synthetase beta subunit family. Type 1 subfamily. Tetramer of two alpha and two beta subunits. Requires Mg(2+) as cofactor.

The protein resides in the cytoplasm. The catalysed reaction is tRNA(Phe) + L-phenylalanine + ATP = L-phenylalanyl-tRNA(Phe) + AMP + diphosphate + H(+). The chain is Phenylalanine--tRNA ligase beta subunit from Psychrobacter arcticus (strain DSM 17307 / VKM B-2377 / 273-4).